The following is a 472-amino-acid chain: MAETLEAVEDAVDILEKEMLSFCNLIPVNSWGFDDDVKESLKMRKHSLVNRQLSKKERKSMSAQQKQHLAKGLGLVPNTVQEVLEWMSKSKQHSKVQPQKVVAPVKRPADQNKNKEKVVKKDQKKQDKKADSDSEEDDSSDDEEKEETDEPVAKKQKKEESSDDDEDSEDGEEPEGNNGAVEAEDSDSTDEEEETPSKPNKTVAQSTLKSNGKIDKEIQKLEDDEDNESPEIRRQIALLRLQKKLKEMKVERKGKGPAKVTSAMAEKMAEEKRLKRRESKLKLKQRRAEEKKGKEAAAQVKKETVESTENGNEPVEKQKSGISFNNLKFEIKEDKQRGKKQRTAKKDRALKLTGRDYKSLIAKVEETKATIAKVREADPHKATIMEDELKWEKTLKRAAGGKVKDNLGMLKKALVKKNKMKDRRKQKWENRENKTEGEKQTKQDKRKKNLQKRIDDVKKRKMNKLRNKGRIL.

4 disordered regions span residues 53–73, 89–232, 249–350, and 414–472; these read LSKK…AKGL, KSKQ…SPEI, KVER…DRAL, and LVKK…GRIL. The segment covering 95–106 has biased composition (low complexity); that stretch reads KVQPQKVVAPVK. The segment covering 107–132 has biased composition (basic and acidic residues); sequence RPADQNKNKEKVVKKDQKKQDKKADS. Residues 133–150 show a composition bias toward acidic residues; sequence DSEEDDSSDDEEKEETDE. Residues 151–160 show a composition bias toward basic and acidic residues; that stretch reads PVAKKQKKEE. Composition is skewed to acidic residues over residues 161 to 175 and 182 to 194; these read SSDD…EEPE and EAED…EEEE. Residues 197–210 are compositionally biased toward polar residues; that stretch reads SKPNKTVAQSTLKS. The span at 212–221 shows a compositional bias: basic and acidic residues; it reads GKIDKEIQKL. Residues 274–285 are compositionally biased toward basic residues; that stretch reads LKRRESKLKLKQ. Positions 286–305 are enriched in basic and acidic residues; that stretch reads RRAEEKKGKEAAAQVKKETV. A compositionally biased stretch (basic residues) spans 414-426; it reads LVKKNKMKDRRKQ. Residues 427-443 are compositionally biased toward basic and acidic residues; it reads KWENRENKTEGEKQTKQ. Residues 459–472 are compositionally biased toward basic residues; the sequence is KRKMNKLRNKGRIL.

It belongs to the SURF6 family.

The protein resides in the nucleus. The protein localises to the nucleoplasm. Its function is as follows. Binds to both DNA and RNA in vitro, with a stronger binding capacity for RNA. May represent a nucleolar constitutive protein involved in ribosomal biosynthesis or assembly. The sequence is that of SURF6 homolog gldi-11 from Caenorhabditis elegans.